A 1569-amino-acid polypeptide reads, in one-letter code: Pentafunctional AROM polypeptide (1569 aa).

A 3-dehydroquinate synthase region spans residues 1–382 (MAEAKKPGPE…HEPRASVVDD (382 aa)). Residues 49–51 (DTN), 84–87 (EASK), 115–117 (GGV), and Asp-120 each bind NAD(+). A 7-phospho-2-dehydro-3-deoxy-D-arabino-heptonate-binding site is contributed by Arg-131. 140-141 (TT) serves as a coordination point for NAD(+). The 7-phospho-2-dehydro-3-deoxy-D-arabino-heptonate site is built by Asp-147 and Lys-153. Position 162 (Lys-162) interacts with NAD(+). Asn-163 is a binding site for 7-phospho-2-dehydro-3-deoxy-D-arabino-heptonate. Residues 180 to 183 (FLET) and Asn-191 each bind NAD(+). Zn(2+) is bound at residue Glu-195. 7-phospho-2-dehydro-3-deoxy-D-arabino-heptonate-binding positions include 195 to 198 (EVVK) and Lys-248. Glu-258 serves as the catalytic Proton acceptor; for 3-dehydroquinate synthase activity. 7-phospho-2-dehydro-3-deoxy-D-arabino-heptonate is bound by residues 262–266 (RNLLN) and His-269. Zn(2+) is bound at residue His-269. Residue His-273 is the Proton acceptor; for 3-dehydroquinate synthase activity of the active site. The 7-phospho-2-dehydro-3-deoxy-D-arabino-heptonate site is built by His-285 and Lys-354. His-285 contributes to the Zn(2+) binding site. An EPSP synthase region spans residues 395–837 (VTPGVPSNLD…WDILSQAFKV (443 aa)). Cys-819 (for EPSP synthase activity) is an active-site residue. The shikimate kinase stretch occupies residues 859 to 1053 (ERSVFIIGMR…MEKDHSFFVS (195 aa)). 866-873 (GMRGAGKT) serves as a coordination point for ATP. The tract at residues 1054–1267 (LTVPDVSEAA…AAPGQMSAAE (214 aa)) is 3-dehydroquinase. His-1170 serves as the catalytic Proton acceptor; for 3-dehydroquinate dehydratase activity. Lys-1198 functions as the Schiff-base intermediate with substrate; for 3-dehydroquinate dehydratase activity in the catalytic mechanism. Residues 1280–1569 (PCNFYLFGKP…RDARSAVLGL (290 aa)) form a shikimate dehydrogenase region.

The protein in the N-terminal section; belongs to the sugar phosphate cyclases superfamily. Dehydroquinate synthase family. In the 2nd section; belongs to the EPSP synthase family. It in the 3rd section; belongs to the shikimate kinase family. This sequence in the 4th section; belongs to the type-I 3-dehydroquinase family. The protein in the C-terminal section; belongs to the shikimate dehydrogenase family. As to quaternary structure, homodimer. It depends on Zn(2+) as a cofactor.

The protein resides in the cytoplasm. It carries out the reaction 7-phospho-2-dehydro-3-deoxy-D-arabino-heptonate = 3-dehydroquinate + phosphate. The enzyme catalyses 3-dehydroquinate = 3-dehydroshikimate + H2O. It catalyses the reaction shikimate + NADP(+) = 3-dehydroshikimate + NADPH + H(+). The catalysed reaction is shikimate + ATP = 3-phosphoshikimate + ADP + H(+). It carries out the reaction 3-phosphoshikimate + phosphoenolpyruvate = 5-O-(1-carboxyvinyl)-3-phosphoshikimate + phosphate. It participates in metabolic intermediate biosynthesis; chorismate biosynthesis; chorismate from D-erythrose 4-phosphate and phosphoenolpyruvate: step 2/7. Its pathway is metabolic intermediate biosynthesis; chorismate biosynthesis; chorismate from D-erythrose 4-phosphate and phosphoenolpyruvate: step 3/7. The protein operates within metabolic intermediate biosynthesis; chorismate biosynthesis; chorismate from D-erythrose 4-phosphate and phosphoenolpyruvate: step 4/7. It functions in the pathway metabolic intermediate biosynthesis; chorismate biosynthesis; chorismate from D-erythrose 4-phosphate and phosphoenolpyruvate: step 5/7. It participates in metabolic intermediate biosynthesis; chorismate biosynthesis; chorismate from D-erythrose 4-phosphate and phosphoenolpyruvate: step 6/7. The AROM polypeptide catalyzes 5 consecutive enzymatic reactions in prechorismate polyaromatic amino acid biosynthesis. This Fusarium vanettenii (strain ATCC MYA-4622 / CBS 123669 / FGSC 9596 / NRRL 45880 / 77-13-4) (Fusarium solani subsp. pisi) protein is Pentafunctional AROM polypeptide.